The following is a 431-amino-acid chain: Xaa-Arg dipeptidase (431 aa).

Belongs to the peptidase M20A family.

It catalyses the reaction beta-alanyl-L-lysine + H2O = beta-alanine + L-lysine. The enzyme catalyses beta-alanyl-L-arginine + H2O = beta-alanine + L-arginine. It carries out the reaction beta-alanyl-L-ornithine + H2O = beta-alanine + L-ornithine. The catalysed reaction is N(2)-(4-aminobutanoyl)-L-lysine + H2O = 4-aminobutanoate + L-lysine. It catalyses the reaction N(2)-(4-aminobutanoyl)-L-arginine + H2O = 4-aminobutanoate + L-arginine. The enzyme catalyses N(2)-(4-aminobutanoyl)-L-ornithine + H2O = 4-aminobutanoate + L-ornithine. Its function is as follows. Catalyzes the peptide bond hydrolysis in dipeptides having basic amino acids lysine, ornithine or arginine at C-terminus. Postulated to function in a metabolite repair mechanism by eliminating alternate dipeptide by-products formed during carnosine synthesis. This Mus musculus (Mouse) protein is Xaa-Arg dipeptidase.